The primary structure comprises 244 residues: Probable transcriptional regulatory protein XfasM23_0940 (244 aa).

This sequence belongs to the TACO1 family.

It is found in the cytoplasm. This chain is Probable transcriptional regulatory protein XfasM23_0940, found in Xylella fastidiosa (strain M23).